Here is a 274-residue protein sequence, read N- to C-terminus: MGTLSVNQNKLQKRLRRLAGEAITDYNMIEDGDKVMVCLSGGKDSYTMLDVLLHLQKVAPIKFEIVAVNMDQKQPGFPEHVLPAYLKELGVEYHIVEKDTYSVVKELVPEGKTTCSLCSRLRRGTLYTFADEIGATKMALGHHRDDIVETFFLNMFFNGSLKGMPPKLRADDGRNVVIRPLAYCSEKDIQAYSDMKEFPIIPCNLCGSQENLQRQVVKDMLVEWERKHPGRTESIFRALQNVAPSQLADRNLFDFTSLKIDESATPRFLDVLNI.

Positions 40-45 (SGGKDS) match the PP-loop motif motif. [4Fe-4S] cluster contacts are provided by cysteine 115, cysteine 118, and cysteine 206.

It belongs to the TtcA family. In terms of assembly, homodimer. The cofactor is Mg(2+). [4Fe-4S] cluster serves as cofactor.

It localises to the cytoplasm. It catalyses the reaction cytidine(32) in tRNA + S-sulfanyl-L-cysteinyl-[cysteine desulfurase] + AH2 + ATP = 2-thiocytidine(32) in tRNA + L-cysteinyl-[cysteine desulfurase] + A + AMP + diphosphate + H(+). It participates in tRNA modification. Its function is as follows. Catalyzes the ATP-dependent 2-thiolation of cytidine in position 32 of tRNA, to form 2-thiocytidine (s(2)C32). The sulfur atoms are provided by the cysteine/cysteine desulfurase (IscS) system. The sequence is that of tRNA-cytidine(32) 2-sulfurtransferase from Pseudomonas putida (strain W619).